A 368-amino-acid chain; its full sequence is tRNA/tmRNA (uracil-C(5))-methyltransferase (368 aa).

Gln-192, Tyr-220, Asn-225, Glu-241, and Asp-301 together coordinate S-adenosyl-L-methionine. Cys-326 acts as the Nucleophile in catalysis. Glu-360 acts as the Proton acceptor in catalysis.

This sequence belongs to the class I-like SAM-binding methyltransferase superfamily. RNA M5U methyltransferase family. TrmA subfamily.

It carries out the reaction uridine(54) in tRNA + S-adenosyl-L-methionine = 5-methyluridine(54) in tRNA + S-adenosyl-L-homocysteine + H(+). The enzyme catalyses uridine(341) in tmRNA + S-adenosyl-L-methionine = 5-methyluridine(341) in tmRNA + S-adenosyl-L-homocysteine + H(+). Functionally, dual-specificity methyltransferase that catalyzes the formation of 5-methyluridine at position 54 (m5U54) in all tRNAs, and that of position 341 (m5U341) in tmRNA (transfer-mRNA). The sequence is that of tRNA/tmRNA (uracil-C(5))-methyltransferase from Actinobacillus pleuropneumoniae serotype 3 (strain JL03).